Consider the following 792-residue polypeptide: Endonuclease MutS2 (792 aa).

An ATP-binding site is contributed by 344-351 (GPNTGGKT). A Smr domain is found at 716-791 (IHLRGLHVEE…GLGVTVVYLE (76 aa)).

The protein belongs to the DNA mismatch repair MutS family. MutS2 subfamily. As to quaternary structure, homodimer. Binds to stalled ribosomes, contacting rRNA.

In terms of biological role, endonuclease that is involved in the suppression of homologous recombination and thus may have a key role in the control of bacterial genetic diversity. Functionally, acts as a ribosome collision sensor, splitting the ribosome into its 2 subunits. Detects stalled/collided 70S ribosomes which it binds and splits by an ATP-hydrolysis driven conformational change. Acts upstream of the ribosome quality control system (RQC), a ribosome-associated complex that mediates the extraction of incompletely synthesized nascent chains from stalled ribosomes and their subsequent degradation. Probably generates substrates for RQC. This chain is Endonuclease MutS2, found in Thermomicrobium roseum (strain ATCC 27502 / DSM 5159 / P-2).